We begin with the raw amino-acid sequence, 485 residues long: MSDFTSKVKVLRDGQKPEFPSNANTLEYAQSLDAQDELRHFRNEFIIPTRASLKKKALDGIIPGTQANGTTTSTDADTPCIYFVGNSLGAQPKAVRHYLEAQLETWASIGVNGHFSSLSNSPLTPWQDMAADCAAKSAAIVGAADPSEVVIMNTLTVNLHFMMASFYRPTDKRHKIILEWRPFPSDWYAFQSQIEWHGLDPEKSIVEMQPDENLYLSTEKILATIDEHAEDAALLLLPGIQYYTGQLFDIPRITKYAQERGIVVGWDLAHCAGNVELQLHDWNVDFAVWCTYKYLNGGPGSMAGAFVHERHGKVDMSLGKPVFKPRLSGWYGADKSVRFNMDKEFQPTPGAQGFQVSNPSAIDLTSLAAALSVFNKTSMKDLRSKALVLTAYTEHLLDEIVRRQPEGEEPAFKIITPRDPLQRGTQLSLLLRDGLMDKVAAALEENGVVCDKRKPNVIRVAPVPMYCRFEDVWKFMEIFEAAIRG.

Residues leucine 155, threonine 156, 183-186, aspartate 267, histidine 270, and tyrosine 292 each bind pyridoxal 5'-phosphate; that span reads FPSD. Lysine 293 is modified (N6-(pyridoxal phosphate)lysine). Pyridoxal 5'-phosphate-binding residues include tryptophan 330 and asparagine 358.

Belongs to the kynureninase family. In terms of assembly, homodimer. Requires pyridoxal 5'-phosphate as cofactor.

It localises to the cytoplasm. The catalysed reaction is L-kynurenine + H2O = anthranilate + L-alanine + H(+). It carries out the reaction 3-hydroxy-L-kynurenine + H2O = 3-hydroxyanthranilate + L-alanine + H(+). It functions in the pathway amino-acid degradation; L-kynurenine degradation; L-alanine and anthranilate from L-kynurenine: step 1/1. The protein operates within cofactor biosynthesis; NAD(+) biosynthesis; quinolinate from L-kynurenine: step 2/3. Catalyzes the cleavage of L-kynurenine (L-Kyn) and L-3-hydroxykynurenine (L-3OHKyn) into anthranilic acid (AA) and 3-hydroxyanthranilic acid (3-OHAA), respectively. The sequence is that of Kynureninase 1 (kyn-1) from Neurospora crassa (strain ATCC 24698 / 74-OR23-1A / CBS 708.71 / DSM 1257 / FGSC 987).